The chain runs to 445 residues: Glucose-6-phosphate isomerase (445 aa).

The Proton donor role is filled by glutamate 287. Active-site residues include histidine 308 and lysine 422.

This sequence belongs to the GPI family.

The protein localises to the cytoplasm. The catalysed reaction is alpha-D-glucose 6-phosphate = beta-D-fructose 6-phosphate. Its pathway is carbohydrate biosynthesis; gluconeogenesis. The protein operates within carbohydrate degradation; glycolysis; D-glyceraldehyde 3-phosphate and glycerone phosphate from D-glucose: step 2/4. Its function is as follows. Catalyzes the reversible isomerization of glucose-6-phosphate to fructose-6-phosphate. This chain is Glucose-6-phosphate isomerase, found in Bacteroides fragilis (strain ATCC 25285 / DSM 2151 / CCUG 4856 / JCM 11019 / LMG 10263 / NCTC 9343 / Onslow / VPI 2553 / EN-2).